Consider the following 170-residue polypeptide: Small ribosomal subunit protein uS5 (170 aa).

Residues 13 to 76 (LTEKLIGVNR…DQARRSMVKI (64 aa)) form the S5 DRBM domain.

The protein belongs to the universal ribosomal protein uS5 family. As to quaternary structure, part of the 30S ribosomal subunit. Contacts proteins S4 and S8.

In terms of biological role, with S4 and S12 plays an important role in translational accuracy. Functionally, located at the back of the 30S subunit body where it stabilizes the conformation of the head with respect to the body. The protein is Small ribosomal subunit protein uS5 of Laribacter hongkongensis (strain HLHK9).